We begin with the raw amino-acid sequence, 392 residues long: Aspartate aminotransferase (392 aa).

3 residues coordinate L-aspartate: Gly40, Trp126, and Asn176. Lys239 carries the N6-(pyridoxal phosphate)lysine modification.

It belongs to the class-I pyridoxal-phosphate-dependent aminotransferase family. In terms of assembly, homodimer. Requires pyridoxal 5'-phosphate as cofactor.

Its subcellular location is the cytoplasm. The catalysed reaction is L-aspartate + 2-oxoglutarate = oxaloacetate + L-glutamate. The sequence is that of Aspartate aminotransferase from Bacillus sp. (strain YM-2).